The following is an 89-amino-acid chain: Putative septation protein SpoVG (89 aa).

This sequence belongs to the SpoVG family.

Could be involved in septation. The protein is Putative septation protein SpoVG of Heliobacterium modesticaldum (strain ATCC 51547 / Ice1).